We begin with the raw amino-acid sequence, 387 residues long: Mannitol-1-phosphate 5-dehydrogenase (387 aa).

3–14 (ALHFGAGNIGRG) contacts NAD(+).

The protein belongs to the mannitol dehydrogenase family.

It catalyses the reaction D-mannitol 1-phosphate + NAD(+) = beta-D-fructose 6-phosphate + NADH + H(+). The chain is Mannitol-1-phosphate 5-dehydrogenase from Yersinia pestis bv. Antiqua (strain Antiqua).